The following is a 149-amino-acid chain: General odorant-binding protein 57c (149 aa).

An N-terminal signal peptide occupies residues 1–16 (MLKLWLICILTVSVVS). Intrachain disulfides connect Cys-32/Cys-70, Cys-66/Cys-117, and Cys-106/Cys-126.

The protein belongs to the PBP/GOBP family.

Present in the aqueous fluid surrounding olfactory sensory dendrites and are thought to aid in the capture and transport of hydrophobic odorants into and through this fluid. The chain is General odorant-binding protein 57c from Drosophila melanogaster (Fruit fly).